Here is a 1017-residue protein sequence, read N- to C-terminus: Voltage-gated delayed rectifier potassium channel KCNH4 (1017 aa).

Over 1–232 (MPVMKGLLAP…YSIPKAVWDG (232 aa)) the chain is Cytoplasmic. One can recognise a PAS domain in the interval 14–90 (FLDTIATRFD…QRLQKALEGH (77 aa)). In terms of domain architecture, PAC spans 93–145 (HRAEICFYRKDGSAFWCLLDMMPIKNELGEVVLFLFSFKDISQSGGPGLGSPG). Residues 139–170 (PGLGSPGIHGDNNNHENSLGRRGASSRLRSTR) form a disordered region. A helical transmembrane segment spans residues 233–253 (LILLATFYVAVTVPYNVCFAG). The Extracellular portion of the chain corresponds to 254-262 (DDDTPITSR). Residues 263-283 (HTLVSDIAVEMLFILDIILNF) traverse the membrane as a helical segment. Residues 284-305 (RTTYVSQSGQVVSAPRSIGLHY) lie on the Cytoplasmic side of the membrane. A helical membrane pass occupies residues 306–326 (LATWFFVDLIAALPFDLLYVF). Topologically, residues 327–334 (NITVTSLV) are extracellular. The chain crosses the membrane as a helical; Voltage-sensor span at residues 335–355 (HLLKTVRLLRLLRLLQKLERY). At 356-364 (SQCSAVVLT) the chain is on the cytoplasmic side. A helical membrane pass occupies residues 365–385 (LLMSVFALLAHWMACVWYVIG). Residues 386–427 (RREMEANDPLLWDIGWLHELGKRLEEPYVNGSAGGPSRRSAY) lie on the Extracellular side of the membrane. N-linked (GlcNAc...) asparagine glycosylation is present at asparagine 415. Positions 428–448 (IAALYFTLSSLTSVGFGNVCA) form an intramembrane region, pore-forming. A Selectivity filter motif is present at residues 440–445 (SVGFGN). Residues 449–454 (NTDAEK) lie on the Extracellular side of the membrane. Residues 455–475 (IFSICTMLIGALMHAVVFGNV) traverse the membrane as a helical segment. Topologically, residues 476-1017 (TAIIQRMYSR…SFQSGSDTFH (542 aa)) are cytoplasmic. Residues 557–621 (LFGAASRGCL…AILGKGDLIG (65 aa)) are cNMP-binding domain. Disordered regions lie at residues 690–749 (GSEN…PNLS) and 771–870 (LVSS…ELAT). Residues 703–726 (PRLSQARSDTLGSSSDKTLPSITE) show a composition bias toward polar residues. 2 stretches are compositionally biased toward low complexity: residues 771–786 (LVSS…PALA) and 806–820 (PPQL…FGPP). Residues 873 to 907 (AEEVKEKVCRLNQEISRLNQEVSQLSRELRQVMGL) are a coiled coil. The interval 972-1017 (SELRSSMVPPFPSEPDPLGPSPVPEASPLTPSLLKHSFQSGSDTFH) is disordered. Over residues 980 to 996 (PPFPSEPDPLGPSPVPE) the composition is skewed to pro residues. The span at 1008 to 1017 (SFQSGSDTFH) shows a compositional bias: polar residues.

It belongs to the potassium channel family. H (Eag) (TC 1.A.1.20) subfamily. Kv12.3/KCNH4 sub-subfamily. In terms of assembly, the potassium channel is probably composed of a homo- or heterotetrameric complex of pore-forming alpha subunits that can associate with modulating beta subunits. As to expression, highly expressed in adult testis, and in adult and embryonic brain. In adult brain found in piriform cortex, olfactory tubercle, cerebral cortex, hippocampus pyramidial cells and dentate gyrus and basal ganglia of caudate/putamen and accumbens nucleus. Detected at intermediate levels in lung, spinal cord, and pituitary.

It localises to the membrane. The enzyme catalyses K(+)(in) = K(+)(out). Pore-forming (alpha) subunit of a voltage-gated delayed rectifier. Activates at more negative voltages, exhibits fast prepulse-independent activation kinetics and deactivates much more slowly, but shows no inactivation. In Rattus norvegicus (Rat), this protein is Voltage-gated delayed rectifier potassium channel KCNH4.